Reading from the N-terminus, the 517-residue chain is Maturase K (517 aa).

It belongs to the intron maturase 2 family. MatK subfamily.

Its subcellular location is the plastid. It is found in the chloroplast. Functionally, usually encoded in the trnK tRNA gene intron. Probably assists in splicing its own and other chloroplast group II introns. The sequence is that of Maturase K from Palhinhaea cernua (Nodding clubmoss).